The chain runs to 572 residues: Probable pyruvate decarboxylase C186.09 (572 aa).

Substrate is bound by residues D38 and H125. The interval 400–482 is thiamine pyrophosphate binding; the sequence is DSWFGGMRIT…FLINNRGYTI (83 aa). Mg(2+) is bound by residues D450, N477, and G479. Residue E483 participates in substrate binding.

It belongs to the TPP enzyme family. Homotetramer. The cofactor is a metal cation. Requires thiamine diphosphate as cofactor.

It carries out the reaction a 2-oxocarboxylate + H(+) = an aldehyde + CO2. In Schizosaccharomyces pombe (strain 972 / ATCC 24843) (Fission yeast), this protein is Probable pyruvate decarboxylase C186.09.